The primary structure comprises 335 residues: Atypical chemokine receptor 1 (335 aa).

Over 1 to 62 (MGNCLHPAEL…CNLLDDSALP (62 aa)) the chain is Extracellular. 3 N-linked (GlcNAc...) asparagine glycosylation sites follow: Asn16, Asn26, and Asn32. 2 cysteine pairs are disulfide-bonded: Cys50–Cys275 and Cys128–Cys194. A helical membrane pass occupies residues 63 to 83 (FFILVSVLGILASGTVLFMFF). Topologically, residues 84 to 94 (RPLFHWQLCPG) are cytoplasmic. The chain crosses the membrane as a helical span at residues 95 to 115 (WPVLAQLAVGSALFSIVVPIL). At 116-128 (APGLGNTRSSALC) the chain is on the extracellular side. The chain crosses the membrane as a helical span at residues 129-152 (SLGYCVWYGSAFAQALLLGCHASL). At 153–165 (GPKLGAGQVPGLT) the chain is on the cytoplasmic side. Residues 166-186 (LGLSVGLWGVAALLTLPITLA) traverse the membrane as a helical segment. Residues 187-206 (SGASGGLCTPAYSMELKALQ) are Extracellular-facing. The chain crosses the membrane as a helical span at residues 207–227 (ATHAVACLAVFVLLPLGLFGA). The Cytoplasmic segment spans residues 228 to 243 (KGLKKALGMGPGPWMN). Residues 244–264 (ILWAWFIFWWPHGVVLGLDFL) form a helical membrane-spanning segment. Residues 265-286 (VRSKLLLLSTCLAQQALDLLLN) lie on the Extracellular side of the membrane. The chain crosses the membrane as a helical span at residues 287-307 (LAEALAILHCVATPLLLALFC). The Cytoplasmic portion of the chain corresponds to 308–335 (HQATRTLLPSLPLPEGWSSHLDTLGSES).

This sequence belongs to the G-protein coupled receptor 1 family. Atypical chemokine receptor subfamily. As to quaternary structure, (Microbial infection) Interacts (via N-terminal extracellular domain) with Plasmodium knowlesi Duffy receptor alpha form (DBPalpha) (via region II).

The protein resides in the early endosome. Its subcellular location is the recycling endosome. It is found in the membrane. Its function is as follows. Atypical chemokine receptor that controls chemokine levels and localization via high-affinity chemokine binding that is uncoupled from classic ligand-driven signal transduction cascades, resulting instead in chemokine sequestration, degradation, or transcytosis. Also known as interceptor (internalizing receptor) or chemokine-scavenging receptor or chemokine decoy receptor. Has a promiscuous chemokine-binding profile, interacting with inflammatory chemokines of both the CXC and the CC subfamilies but not with homeostatic chemokines. Acts as a receptor for chemokines including CCL2, CCL5, CCL7, CCL11, CCL13, CCL14, CCL17, CXCL5, CXCL6, IL8/CXCL8, CXCL11, GRO, RANTES, MCP-1 and TARC. May regulate chemokine bioavailability and, consequently, leukocyte recruitment through two distinct mechanisms: when expressed in endothelial cells, it sustains the abluminal to luminal transcytosis of tissue-derived chemokines and their subsequent presentation to circulating leukocytes; when expressed in erythrocytes, serves as blood reservoir of cognate chemokines but also as a chemokine sink, buffering potential surges in plasma chemokine levels. In terms of biological role, (Microbial infection) Acts as a receptor for the malaria parasite Plasmodium knowlesi. This chain is Atypical chemokine receptor 1 (ACKR1), found in Macaca mulatta (Rhesus macaque).